A 152-amino-acid chain; its full sequence is Ribonuclease pancreatic (152 aa).

Positions 1–24 (MALDKSVILLPLLVLVLLVLGCLG) are cleaved as a signal peptide. Substrate is bound by residues K31 and R34. The active-site Proton acceptor is the H36. The N-linked (GlcNAc...) asparagine glycan is linked to N46. Intrachain disulfides connect C50-C108, C64-C119, C82-C134, and C89-C96. Residues 65 to 69 (KPVNT), K90, and R109 each bind substrate. N112 is a glycosylation site (N-linked (GlcNAc...) asparagine). H143 functions as the Proton donor in the catalytic mechanism.

Belongs to the pancreatic ribonuclease family. In terms of assembly, monomer. Interacts with and forms tight 1:1 complexes with RNH1. Dimerization of two such complexes may occur. Interaction with RNH1 inhibits this protein.

Its subcellular location is the secreted. The catalysed reaction is an [RNA] containing cytidine + H2O = an [RNA]-3'-cytidine-3'-phosphate + a 5'-hydroxy-ribonucleotide-3'-[RNA].. The enzyme catalyses an [RNA] containing uridine + H2O = an [RNA]-3'-uridine-3'-phosphate + a 5'-hydroxy-ribonucleotide-3'-[RNA].. Endonuclease that catalyzes the cleavage of RNA on the 3' side of pyrimidine nucleotides. Acts on single-stranded and double-stranded RNA. The polypeptide is Ribonuclease pancreatic (RNASE1) (Papio hamadryas (Hamadryas baboon)).